The chain runs to 292 residues: MASNRGQLNHELSKLFNELWDADQNRMKSGKDYRISLQGKAGYVPAGSNQARDSASFPLFQFVDEEKLKSRKTFATFISLLDNYEMDTGVAEVVTPEEIAENNNFLDAILETKVMKMAHDYLVRKNQAKPTRNDFKVQLYNIWFQLYSRAPGSRPDSCGFEHVFVGESKRGQEMMGLHNWVQFYLQEKRKNIDYKGYVARQNKSRPDEDDQVLNLQFNWKEMVKPVGSSFIGVSPEFEFALYTIVFLASQEKMSREVVRLEEYELQIVVNRHGRYIGTAYPVLLSTNNPDLY.

Residues 8–285 (LNHELSKLFN…IGTAYPVLLS (278 aa)) form the EndoU domain. Residues His162, His178, and Lys224 contribute to the active site.

The protein belongs to the ENDOU family. Monomer. The cofactor is Mn(2+).

It localises to the nucleus. It catalyses the reaction uridylyl-uridylyl-ribonucleotide-RNA = a 3'-end uridylyl-2',3'-cyclophospho-uridine-RNA + a 5'-end dephospho-ribonucleoside-RNA. In terms of biological role, poly(U)-specific endoribonuclease involved in the processing of intron-encoded box C/D snoRNAs, such as U16 and U86. Releases products that have 2',3'-cyclic phosphate termini at the 3'-end. The protein is Poly(U)-specific endoribonuclease-A (endou-a) of Xenopus laevis (African clawed frog).